Reading from the N-terminus, the 123-residue chain is UPF0738 protein BcerKBAB4_1107 (123 aa).

Belongs to the UPF0738 family.

In Bacillus mycoides (strain KBAB4) (Bacillus weihenstephanensis), this protein is UPF0738 protein BcerKBAB4_1107.